Reading from the N-terminus, the 36-residue chain is Trypsin inhibitor 2 (36 aa).

3 disulfides stabilise this stretch: Cys-3–Cys-20, Cys-10–Cys-24, and Cys-19–Cys-35.

Trypsin inhibitor. In Spinacia oleracea (Spinach), this protein is Trypsin inhibitor 2.